Here is a 320-residue protein sequence, read N- to C-terminus: ATP-dependent 6-phosphofructokinase (320 aa).

Gly12 provides a ligand contact to ATP. ADP-binding positions include 22 to 26 (RGVVR) and 55 to 60 (RYSVSD). Residues 73–74 (RF) and 103–106 (GDGS) contribute to the ATP site. Asp104 lines the Mg(2+) pocket. 126–128 (TID) serves as a coordination point for substrate. Asp128 (proton acceptor) is an active-site residue. Arg155 is a binding site for ADP. Residues Arg163 and 170–172 (MGR) each bind substrate. ADP-binding positions include 186–188 (GCE), Lys212, and 214–216 (KKH). Substrate-binding positions include Glu223, Arg244, and 250-253 (HIQR).

The protein belongs to the phosphofructokinase type A (PFKA) family. ATP-dependent PFK group I subfamily. Prokaryotic clade 'B1' sub-subfamily. As to quaternary structure, homotetramer. Requires Mg(2+) as cofactor.

It localises to the cytoplasm. The enzyme catalyses beta-D-fructose 6-phosphate + ATP = beta-D-fructose 1,6-bisphosphate + ADP + H(+). The protein operates within carbohydrate degradation; glycolysis; D-glyceraldehyde 3-phosphate and glycerone phosphate from D-glucose: step 3/4. Its activity is regulated as follows. Allosterically activated by ADP and other diphosphonucleosides, and allosterically inhibited by phosphoenolpyruvate. Functionally, catalyzes the phosphorylation of D-fructose 6-phosphate to fructose 1,6-bisphosphate by ATP, the first committing step of glycolysis. This is ATP-dependent 6-phosphofructokinase from Sodalis glossinidius (strain morsitans).